Here is a 215-residue protein sequence, read N- to C-terminus: Thymidylate kinase (215 aa).

Residue 11 to 18 (GIDGAGKS) coordinates ATP.

This sequence belongs to the thymidylate kinase family.

It catalyses the reaction dTMP + ATP = dTDP + ADP. Its function is as follows. Phosphorylation of dTMP to form dTDP in both de novo and salvage pathways of dTTP synthesis. This is Thymidylate kinase from Nitrosomonas eutropha (strain DSM 101675 / C91 / Nm57).